The following is a 259-amino-acid chain: DNA repair protein RecO (259 aa).

This sequence belongs to the RecO family.

Functionally, involved in DNA repair and RecF pathway recombination. The protein is DNA repair protein RecO of Syntrophus aciditrophicus (strain SB).